A 147-amino-acid chain; its full sequence is UPF0735 ACT domain-containing protein GK2605 (147 aa).

The ACT domain occupies 69–144 (TLFFHLEDRS…FVEKVEIVGS (76 aa)).

Belongs to the UPF0735 family.

The chain is UPF0735 ACT domain-containing protein GK2605 from Geobacillus kaustophilus (strain HTA426).